A 352-amino-acid polypeptide reads, in one-letter code: Histidine biosynthesis bifunctional protein HisB (352 aa).

The histidinol-phosphatase stretch occupies residues 1–163; that stretch reads MKKILFIDRD…MVASAIINDA (163 aa). Asp8 acts as the Nucleophile in catalysis. Residues Asp8 and Asp10 each coordinate Mg(2+). The active-site Proton donor is Asp10. Residues Cys91, His93, Cys99, and Cys101 each coordinate Zn(2+). Residue Asp128 participates in Mg(2+) binding. The tract at residues 164–352 is imidazoleglycerol-phosphate dehydratase; sequence RKASVQRKTK…NYLPSTKGVL (189 aa).

In the N-terminal section; belongs to the histidinol-phosphatase family. It in the C-terminal section; belongs to the imidazoleglycerol-phosphate dehydratase family. Mg(2+) is required as a cofactor. It depends on Zn(2+) as a cofactor.

The protein localises to the cytoplasm. It carries out the reaction D-erythro-1-(imidazol-4-yl)glycerol 3-phosphate = 3-(imidazol-4-yl)-2-oxopropyl phosphate + H2O. It catalyses the reaction L-histidinol phosphate + H2O = L-histidinol + phosphate. Its pathway is amino-acid biosynthesis; L-histidine biosynthesis; L-histidine from 5-phospho-alpha-D-ribose 1-diphosphate: step 6/9. It functions in the pathway amino-acid biosynthesis; L-histidine biosynthesis; L-histidine from 5-phospho-alpha-D-ribose 1-diphosphate: step 8/9. In Legionella pneumophila (strain Lens), this protein is Histidine biosynthesis bifunctional protein HisB.